The sequence spans 367 residues: Cellular tumor antigen p53 (367 aa).

The interval 1–30 (MAEEMEPLLEPTEVFMDLWSMLPYSMQQLP) is transcription activation (acidic). The tract at residues 30-84 (PLPEDHSNWQELSPLEPSDPPPPPPPPPLPLAAAAPPPLNPPTPPRAAPSPVVPS) is disordered. Over residues 46-81 (PSDPPPPPPPPPLPLAAAAPPPLNPPTPPRAAPSPV) the composition is skewed to pro residues. The DNA-binding element occupies 87-278 (DYGGDFDFRV…KIEEENFRKR (192 aa)). The Zn(2+) site is built by Cys-161, His-164, Cys-224, and Cys-228. The tract at residues 259-266 (RVCACPGR) is interaction with DNA. Disordered regions lie at residues 275 to 303 (FRKR…KKRV) and 333 to 367 (LAEG…KGSD). Positions 286-302 (KRAMSPPTEAPEPPKKR) match the Bipartite nuclear localization signal motif. Positions 308–339 (NEIFYLQVRGRRRYEMLKEINEALQLAEGGSA) are oligomerization. The short motif at 322–333 (EMLKEINEALQL) is the Nuclear export signal element. Residues 347-364 (RVKVEGPQPSCGKKLLQK) are basic (repression of DNA-binding).

It belongs to the p53 family. In terms of assembly, binds DNA as a homotetramer. Zn(2+) serves as cofactor.

Its subcellular location is the cytoplasm. It is found in the nucleus. Its function is as follows. Multifunctional transcription factor that induces cell cycle arrest, DNA repair or apoptosis upon binding to its target DNA sequence. Acts as a tumor suppressor in many tumor types; induces growth arrest or apoptosis depending on the physiological circumstances and cell type. Negatively regulates cell division by controlling expression of a set of genes required for this process. One of the activated genes is an inhibitor of cyclin-dependent kinases. Apoptosis induction seems to be mediated either by stimulation of BAX and FAS antigen expression, or by repression of Bcl-2 expression. This is Cellular tumor antigen p53 (TP53) from Gallus gallus (Chicken).